We begin with the raw amino-acid sequence, 321 residues long: Lipoyl synthase (321 aa).

Cysteine 68, cysteine 73, cysteine 79, cysteine 94, cysteine 98, cysteine 101, and serine 308 together coordinate [4Fe-4S] cluster. In terms of domain architecture, Radical SAM core spans 80–297 (FNHGTATFMI…KALADELGFT (218 aa)).

This sequence belongs to the radical SAM superfamily. Lipoyl synthase family. It depends on [4Fe-4S] cluster as a cofactor.

It is found in the cytoplasm. It catalyses the reaction [[Fe-S] cluster scaffold protein carrying a second [4Fe-4S](2+) cluster] + N(6)-octanoyl-L-lysyl-[protein] + 2 oxidized [2Fe-2S]-[ferredoxin] + 2 S-adenosyl-L-methionine + 4 H(+) = [[Fe-S] cluster scaffold protein] + N(6)-[(R)-dihydrolipoyl]-L-lysyl-[protein] + 4 Fe(3+) + 2 hydrogen sulfide + 2 5'-deoxyadenosine + 2 L-methionine + 2 reduced [2Fe-2S]-[ferredoxin]. It functions in the pathway protein modification; protein lipoylation via endogenous pathway; protein N(6)-(lipoyl)lysine from octanoyl-[acyl-carrier-protein]: step 2/2. Its function is as follows. Catalyzes the radical-mediated insertion of two sulfur atoms into the C-6 and C-8 positions of the octanoyl moiety bound to the lipoyl domains of lipoate-dependent enzymes, thereby converting the octanoylated domains into lipoylated derivatives. This chain is Lipoyl synthase, found in Shewanella baltica (strain OS185).